The chain runs to 447 residues: Peptide chain release factor 1, mitochondrial (447 aa).

The N-terminal 63 residues, 1–63 (MNRRHLFAWL…LLNKNCSRRY (63 aa)), are a transit peptide targeting the mitochondrion. A GGQ domain region spans residues 299 to 363 (PKDLRIDTFR…LRARLYQQII (65 aa)). A GGQ motif is present at residues 313–315 (GGQ). Q315 bears the N5-methylglutamine mark.

The protein belongs to the prokaryotic/mitochondrial release factor family. In terms of processing, methylation of glutamine in the GGQ triplet by HEMK1 is conserved from bacteria to mammals.

The protein resides in the mitochondrion. In terms of biological role, mitochondrial peptide chain release factor that directs the termination of translation in response to the peptide chain non-canonical stop codons AGG and AGA. Non-canonical termination codons AGG and AGA are found at the end of MT-CO1/COX1 and MT-ND6/ND6 open reading frames, respectively. Recognizes non-canonical stop codons via a network of interactions between the codon, MTRF1 and the ribosomal RNA (rRNA): in contrast to other translation release factors, which identify the codon in the A-site via direct interactions of amino acid side chains with the bases, MTRF1 repositions the first 2 bases of the stop codon to use an intricate network of interactions that includes residues of the release factor, the rRNA of the small ribosomal subunit, as well as neighboring bases of the mRNA. The chain is Peptide chain release factor 1, mitochondrial (MTRF1) from Bos taurus (Bovine).